The chain runs to 372 residues: N-methyl-L-tryptophan oxidase (372 aa).

An FAD-binding site is contributed by 4–34 (DLIIIGSGSVGAAAGYYATRAGLNVLMTDAH). C308 bears the S-8alpha-FAD cysteine mark.

This sequence belongs to the MSOX/MTOX family. MTOX subfamily. Monomer. It depends on FAD as a cofactor.

The catalysed reaction is N(alpha)-methyl-L-tryptophan + O2 + H2O = L-tryptophan + formaldehyde + H2O2. Catalyzes the oxidative demethylation of N-methyl-L-tryptophan. The sequence is that of N-methyl-L-tryptophan oxidase from Escherichia coli O6:H1 (strain CFT073 / ATCC 700928 / UPEC).